A 449-amino-acid polypeptide reads, in one-letter code: Nucleoprotein (449 aa).

Residues 1–55 (MSFTPGKQSSSRASSGNRSGNGILKWADQSDQSRNVQTRGRRVQSKQTATSQQPS) are disordered. The span at 9-22 (SSSRASSGNRSGNG) shows a compositional bias: low complexity. Composition is skewed to polar residues over residues 29 to 38 (QSDQSRNVQT) and 45 to 55 (SKQTATSQQPS). The segment at 52–194 (QQPSGGTVVP…GYYIEGSGRS (143 aa)) is RNA-binding. The 130-residue stretch at 61–190 (PYYSWFSGIT…VLPQGYYIEG (130 aa)) folds into the CoV N NTD domain. RNA-binding residues include Arg-106, Arg-122, and Arg-164. Disordered stretches follow at residues 158 to 231 (PADI…VTPD), 266 to 297 (ILNK…NFGG), and 387 to 449 (MMNI…TSEI). The residue at position 167 (Ser-167) is a Phosphoserine; by host. Thr-174 carries the post-translational modification Phosphothreonine; by host. Ser-191 is modified (phosphoserine; by host). Composition is skewed to polar residues over residues 194-204 (SAPNSRSTSRA) and 212-227 (GSRS…STPG). In terms of domain architecture, CoV N CTD spans 259–384 (AKEVRQKILN…QNLNAYQHQE (126 aa)). Residues 266 to 276 (ILNKPRQKRSP) are compositionally biased toward basic residues. The segment at 266-385 (ILNKPRQKRS…NLNAYQHQED (120 aa)) is dimerization. The residue at position 391 (Ser-391) is a Phosphoserine; by host. The span at 400-410 (QKNGQVENDNI) shows a compositional bias: polar residues. Residues 423–440 (KSRELTAEDISLLKKMDE) are compositionally biased toward basic and acidic residues. Position 424 is a phosphoserine; by host (Ser-424). Position 428 is a phosphothreonine; by host (Thr-428).

It belongs to the betacoronavirus nucleocapsid protein family. Homooligomer. Both monomeric and oligomeric forms interact with RNA. Interacts with protein M. Interacts with NSP3; this interaction serves to tether the genome to the newly translated replicase-transcriptase complex at a very early stage of infection. ADP-ribosylated. The ADP-ribosylation is retained in the virion during infection. Post-translationally, phosphorylated on serine and threonine residues.

The protein resides in the virion. It is found in the host endoplasmic reticulum-Golgi intermediate compartment. It localises to the host Golgi apparatus. In terms of biological role, packages the positive strand viral genome RNA into a helical ribonucleocapsid (RNP) and plays a fundamental role during virion assembly through its interactions with the viral genome and membrane protein M. Plays an important role in enhancing the efficiency of subgenomic viral RNA transcription as well as viral replication. This chain is Nucleoprotein, found in Sus scrofa (Pig).